The chain runs to 148 residues: MSTHKKKTRKLRGHVSHGHGRIGKHRKHPGGRGNAGGMHHHRINFDKYHPGYFGKLGMRNYHLRRNSKWAPAINLDKLWTLVSEQTRSKYQNHPEGKAPVIDIVKAGYYKLLGKGACLTNLSLLKPSFSLNRLEDKIKAVGGACVLSA.

A compositionally biased stretch (basic residues) spans 1 to 30 (MSTHKKKTRKLRGHVSHGHGRIGKHRKHPG). The interval 1–37 (MSTHKKKTRKLRGHVSHGHGRIGKHRKHPGGRGNAGG) is disordered.

The protein belongs to the universal ribosomal protein uL15 family.

The chain is Large ribosomal subunit protein uL15 (RpL27A) from Tenebrio molitor (Yellow mealworm beetle).